The following is a 196-amino-acid chain: Large ribosomal subunit protein eL15 (196 aa).

Disordered regions lie at residues 72–93 and 163–196; these read SARKRRHKAGRRSKRQGVTRIT and GLTGAGRRNRGLSGKGKGSEKTRPSLRSNGGKGK.

The protein belongs to the eukaryotic ribosomal protein eL15 family. As to quaternary structure, part of the 50S ribosomal subunit. Interacts with protein L7Ae and weakly with L44e.

In Haloarcula marismortui (strain ATCC 43049 / DSM 3752 / JCM 8966 / VKM B-1809) (Halobacterium marismortui), this protein is Large ribosomal subunit protein eL15 (rpl15e).